A 454-amino-acid polypeptide reads, in one-letter code: Alkaline extracellular protease (454 aa).

The first 15 residues, Met-1–Ala-15, serve as a signal peptide directing secretion. A propeptide spanning residues Ala-16–Arg-157 is cleaved from the precursor. One can recognise an Inhibitor I9 domain in the interval Phe-68 to Leu-146. The N-linked (GlcNAc...) asparagine glycan is linked to Asn-123. The Peptidase S8 domain maps to Gln-166–Ile-454. Active-site charge relay system residues include Asp-200, His-231, and Ser-397.

It belongs to the peptidase S8 family. In terms of processing, the pro-region is removed through cleavage by XPR6 after Lys156-Arg157, which yields mature active XPR2. The 10 consecutive -X-Ala- or -X-Pro- dipeptides located over 100 amino acids upstream of the N-terminal of mature XPR2 are subject to dipeptidyl aminopeptidase (DPAPase)-processing. DPAPase activity is not necessary for XPR6 cleavage and for secretion of mature active XPR2. Post-translationally, N-glycosylated. Glycosylation within the pro-region has no effect on secretion and maturation at 18 degrees Celsius, but is required for secretion at 28 degrees Celsius.

It localises to the secreted. The catalysed reaction is Hydrolysis of proteins with broad specificity for peptide bonds, and a preference for a large uncharged residue in P1. Hydrolyzes peptide amides.. With respect to regulation, the protease activity is completely inhibited by the serine inhibitor PMSF but is not affected by thiol group inhibitors and in the presence of dithiothreitol. In the presence of high concentrations of o-phenanthroline the protease activity is only partially inhibited. The pro-region plays an inhibitory role and may provide a mechanism for preventing premature activation in the secretory pathway. In terms of biological role, major secreted protein that belongs to the subtilisin family serine proteases. This chain is Alkaline extracellular protease, found in Yarrowia lipolytica (strain CLIB 122 / E 150) (Yeast).